The chain runs to 194 residues: dITP/XTP pyrophosphatase (194 aa).

Residue 9-14 (THNPGK) participates in substrate binding. Positions 40 and 69 each coordinate Mg(2+). D69 serves as the catalytic Proton acceptor. Residues S70, 152–155 (FGYD), K175, and 180–181 (HR) each bind substrate.

This sequence belongs to the HAM1 NTPase family. In terms of assembly, homodimer. The cofactor is Mg(2+).

The catalysed reaction is XTP + H2O = XMP + diphosphate + H(+). The enzyme catalyses dITP + H2O = dIMP + diphosphate + H(+). It catalyses the reaction ITP + H2O = IMP + diphosphate + H(+). Pyrophosphatase that catalyzes the hydrolysis of nucleoside triphosphates to their monophosphate derivatives, with a high preference for the non-canonical purine nucleotides XTP (xanthosine triphosphate), dITP (deoxyinosine triphosphate) and ITP. Seems to function as a house-cleaning enzyme that removes non-canonical purine nucleotides from the nucleotide pool, thus preventing their incorporation into DNA/RNA and avoiding chromosomal lesions. This chain is dITP/XTP pyrophosphatase, found in Caulobacter vibrioides (strain ATCC 19089 / CIP 103742 / CB 15) (Caulobacter crescentus).